The sequence spans 4235 residues: Tenellin synthetase (4235 aa).

In terms of domain architecture, Ketosynthase family 3 (KS3) spans 15-455 (SEPIAIVGSA…GTNAHAIIER (441 aa)). Catalysis depends on for beta-ketoacyl synthase activity residues C189, H326, and H375. The malonyl-CoA:ACP transacylase (MAT) domain stretch occupies residues 590–924 (IFTGQGAQWP…ANDAVAFSTA (335 aa)). The N-terminal hotdog fold stretch occupies residues 993–1135 (HELLGRRMPD…GRIAVHLGAK (143 aa)). The dehydratase (DH) domain stretch occupies residues 993–1310 (HELLGRRMPD…GFEVRAVGEP (318 aa)). The region spanning 993-1313 (HELLGRRMPD…VRAVGEPDAS (321 aa)) is the PKS/mFAS DH domain. Residue H1025 is the Proton acceptor; for dehydratase activity of the active site. Residues 1158 to 1313 (LQQLDCEKLY…VRAVGEPDAS (156 aa)) form a C-terminal hotdog fold region. The active-site Proton donor; for dehydratase activity is the D1217. A methyltransferase (MT) domain region spans residues 1459-1652 (RLYTEDKGMH…FSGVDHIVHD (194 aa)). Residues 2208 to 2381 (TYLMVGAAGG…AASIIHVGHV (174 aa)) form a ketoreductase (KR) domain region. Positions 2500 to 2580 (EAAAAALKGF…QLSALAAKLA (81 aa)) constitute a Carrier 1 domain. Residue S2540 is modified to O-(pantetheine 4'-phosphoryl)serine. Residues 2587 to 2709 (RAQLEEASGN…EISSNGFFTQ (123 aa)) form a disordered region. Residues 2605-2619 (NDKETGPSKKGKAQE) are compositionally biased toward basic and acidic residues. 2 stretches are compositionally biased toward polar residues: residues 2645–2659 (GGSS…SSVS) and 2666–2678 (QEST…NNGE). Residues 2679 to 2695 (STPSKSSNCNSDSGSDN) are compositionally biased toward low complexity. Positions 2720 to 3163 (REAPMSPAQS…TAQSVGDCVV (444 aa)) are condensation (C) domain. An adenylation (A) (KR) domain region spans residues 3197–3609 (CQQHSTKSAI…DGTLLCFGRI (413 aa)). The segment at 3724-3750 (DEAAAATSPSNDNNNNNTPSGGGGEKM) is disordered. A compositionally biased stretch (low complexity) spans 3726-3742 (AAAATSPSNDNNNNNTP). The Carrier 2 domain maps to 3748–3833 (EKMTVRQGEL…GMARCVAEQR (86 aa)). S3793 is modified (O-(pantetheine 4'-phosphoryl)serine). Residues 3860–3889 (EKLQHSSASSSSSSSSSSAGSSSTQRPRKT) are disordered. Over residues 3865–3882 (SSASSSSSSSSSSAGSSS) the composition is skewed to low complexity. Residues 3896-4141 (LTGATGFLGG…LDFGQVDKVV (246 aa)) are reductase (RED) domain.

It in the C-terminal section; belongs to the NRP synthetase family.

It participates in secondary metabolite biosynthesis. In terms of biological role, hybrid PKS-NRPS synthetase; part of the gene cluster that mediates the biosynthesis of tenellin-type 2-pyridones, iron-chelating compounds involved in iron stress tolerance, competition with the natural competitor fungus Metarhizium robertsii and insect hosts infection. TenS catalyzes the assembly of the polyketide-amino acid backbone. Because tenS lacks a designated enoylreductase (ER) domain, the required activity is provided the enoyl reductase tenC. Upon formation of the polyketide backbone on the thiotemplate, the triketide is transferred to the NRPS module and linked to tyrosine to produce the pyrrolidine-2-dione intermediates, including pretellinin A, 11-hydropretellenin A, 12-hydropretellenin A, 13-hydropretellenin A, 14-hydropretellenin A, 12-oxopretellenin A and prototellinin D. The pathway begins with the assembly of the polyketide-amino acid backbone by the hybrid PKS-NRPS tenS with the help of the enoyl reductase tenC. These enzymes catalyze the synthesis of the pyrrolidine-2-dione intermediates pretellinin A, 11-hydropretellenin A, 12-hydropretellenin A, 13-hydropretellenin A, 14-hydropretellenin A, 12-oxopretellenin A and prototellinin D. The cytochrome P450 monooxygenase tenA then catalyzes an oxidative ring expansion of pretenellin A and 14-hydropretellenin A to form the 2-pyridone core, leading to pretenellin B and pyridovericin, respectively. The cytochrome P450 monooxygenase tenB is then required for the selective N-hydroxylation of the 2-pyridone nitrogen of yield tellinin and 15-hydroxytellenin (15-HT), respectively. The UDP-glucosyltransferase GT1 and the methyltransferase MT1, located outside the tenS gene cluster, contribute to the stepwise glycosylation and methylation of 15-HT to obtain the glycoside pyridovericin-N-O-(4-O-methyl-beta-D-glucopyranoside) (PMGP). Additional related compounds such as 1-O-methyl-15-HT, (8Z)-1-O-methyl-15-HT, and O-methyltenellin A are also produced but the enzymes involved in their biosynthesis have still to be determined. The chain is Tenellin synthetase from Beauveria bassiana (strain ARSEF 2860) (White muscardine disease fungus).